Consider the following 306-residue polypeptide: Serine/threonine-protein kinase csk1 (306 aa).

The region spanning 11-306 (LTDIRHLTDG…KVSARLSQYA (296 aa)) is the Protein kinase domain. ATP is bound by residues 17-25 (LTDGTISEV) and Lys-40. Catalysis depends on Asp-129, which acts as the Proton acceptor.

This sequence belongs to the protein kinase superfamily. CMGC Ser/Thr protein kinase family. CDC2/CDKX subfamily.

The catalysed reaction is L-seryl-[protein] + ATP = O-phospho-L-seryl-[protein] + ADP + H(+). It catalyses the reaction L-threonyl-[protein] + ATP = O-phospho-L-threonyl-[protein] + ADP + H(+). Acts as a CAK-activating kinase that specifically activates crk1 of the crk1-mcs2 CAK complex. The polypeptide is Serine/threonine-protein kinase csk1 (csk1) (Schizosaccharomyces pombe (strain 972 / ATCC 24843) (Fission yeast)).